The following is a 130-amino-acid chain: UPF0102 protein Cthe_0758 (130 aa).

It belongs to the UPF0102 family.

The chain is UPF0102 protein Cthe_0758 from Acetivibrio thermocellus (strain ATCC 27405 / DSM 1237 / JCM 9322 / NBRC 103400 / NCIMB 10682 / NRRL B-4536 / VPI 7372) (Clostridium thermocellum).